The following is a 449-amino-acid chain: Glucose-6-phosphate isomerase (449 aa).

The Proton donor role is filled by Glu-291. Catalysis depends on residues His-312 and Lys-426.

It belongs to the GPI family.

Its subcellular location is the cytoplasm. The catalysed reaction is alpha-D-glucose 6-phosphate = beta-D-fructose 6-phosphate. It participates in carbohydrate biosynthesis; gluconeogenesis. Its pathway is carbohydrate degradation; glycolysis; D-glyceraldehyde 3-phosphate and glycerone phosphate from D-glucose: step 2/4. Catalyzes the reversible isomerization of glucose-6-phosphate to fructose-6-phosphate. The protein is Glucose-6-phosphate isomerase of Streptococcus thermophilus (strain CNRZ 1066).